The primary structure comprises 311 residues: MSQRDTLVHLFAGGCGGTVGAILTCPLEVVKTRLQSSSVTLYISEVQLNTMAGASVNRVVSPGPLHCLKAILEKEGPRSLFRGLGPNLVGVAPSRAIYFAAYSNCKEKLNGVFDPDSTQVHMASAAMAGFTAITATNPIWLIKTRLQLDARTRGEKQMGAFECVRKVYQTDGLRGFYRGMSASYAGISETVIHFVIYESIKQKLLECKTASMMETDEESVKEASDFVRMMLAAATSKTCATTIAYPHEVVRTRLREEGTKYRSFFQTLSLIVQEEGYGSLYRGLTTHLVRQIPNTAIMMATYELVVYLLNG.

3 Solcar repeats span residues 4 to 108, 116 to 203, and 224 to 308; these read RDTL…CKEK, DSTQ…IKQK, and SDFV…VVYL. A run of 6 helical transmembrane segments spans residues 7-27, 41-57, 111-131, 180-200, 226-246, and 291-311; these read LVHL…TCPL, LYIS…ASVN, GVFD…AGFT, MSAS…YESI, FVRM…IAYP, and QIPN…LLNG.

It belongs to the mitochondrial carrier (TC 2.A.29) family.

It is found in the mitochondrion inner membrane. The catalysed reaction is UTP(in) + CTP(out) = UTP(out) + CTP(in). It carries out the reaction CTP(out) + UDP(in) = CTP(in) + UDP(out). It catalyses the reaction UMP(in) + CTP(out) = UMP(out) + CTP(in). The enzyme catalyses dUTP(in) + CTP(out) = dUTP(out) + CTP(in). The catalysed reaction is dUMP(in) + CTP(out) = dUMP(out) + CTP(in). It carries out the reaction CDP(in) + CTP(out) = CDP(out) + CTP(in). It catalyses the reaction CTP(out) + CMP(in) = CTP(in) + CMP(out). The enzyme catalyses dCTP(in) + CTP(out) = dCTP(out) + CTP(in). The catalysed reaction is dCDP(in) + CTP(out) = dCDP(out) + CTP(in). It carries out the reaction dCMP(in) + CTP(out) = dCMP(out) + CTP(in). It catalyses the reaction GTP(in) + CTP(out) = GTP(out) + CTP(in). The enzyme catalyses CTP(out) + GDP(in) = CTP(in) + GDP(out). The catalysed reaction is GMP(in) + CTP(out) = GMP(out) + CTP(in). It carries out the reaction dGTP(in) + CTP(out) = dGTP(out) + CTP(in). It catalyses the reaction dGMP(in) + CTP(out) = dGMP(out) + CTP(in). The enzyme catalyses ITP(in) + CTP(out) = ITP(out) + CTP(in). The catalysed reaction is IDP(in) + CTP(out) = IDP(out) + CTP(in). It carries out the reaction IMP(in) + CTP(out) = IMP(out) + CTP(in). It catalyses the reaction CTP(out) = CTP(in). Its function is as follows. Mitochondrial transporter that imports/exports pyrimidine nucleotides into and from mitochondria. Selectively transports cytosine, guanosine, inosine and uridine (deoxy)nucleoside mono-, di-, and triphosphates by antiport mechanism. Catalyzes uniport at much lower rate. May import (deoxy)nucleoside triphosphates in exchange for intramitochondrial (deoxy)nucleoside mono- and diphosphates, thus providing precursors necessary for de novo synthesis of mitochondrial DNA and RNA while exporting products of their catabolism. Participates in mitochondrial genome maintenance, regulation of mitochondrial membrane potential and mitochondrial respiration. The polypeptide is Solute carrier family 25 member 36 (Slc25a36) (Mus musculus (Mouse)).